The chain runs to 191 residues: Probable rho GDP-dissociation inhibitor (191 aa).

The tract at residues 1–22 (MSDHENTGENTSEYQYKQPPQK) is disordered. Residues 8-21 (GENTSEYQYKQPPQ) show a composition bias toward polar residues.

This sequence belongs to the Rho GDI family.

The protein localises to the cytoplasm. Its function is as follows. Regulates the GDP/GTP exchange reaction of the Rho proteins by inhibiting the dissociation of GDP from them, and the subsequent binding of GTP to them. The sequence is that of Probable rho GDP-dissociation inhibitor (rhi-1) from Caenorhabditis elegans.